We begin with the raw amino-acid sequence, 418 residues long: Dihydrofolate synthase/folylpolyglutamate synthase (418 aa).

An ATP-binding site is contributed by 53 to 56 (GKGT). Ser77 provides a ligand contact to Mg(2+). 116–119 (TYFE) lines the 7,8-dihydropteroate pocket. Glu140 contacts Mg(2+). Residue 147–149 (LDA) coordinates 7,8-dihydropteroate. A Mg(2+)-binding site is contributed by His167. Asn252, Arg284, and Asp297 together coordinate ATP.

The protein belongs to the folylpolyglutamate synthase family. Monomer. Requires Mg(2+) as cofactor.

The enzyme catalyses 7,8-dihydropteroate + L-glutamate + ATP = 7,8-dihydrofolate + ADP + phosphate + H(+). It catalyses the reaction (6S)-5,6,7,8-tetrahydrofolyl-(gamma-L-Glu)(n) + L-glutamate + ATP = (6S)-5,6,7,8-tetrahydrofolyl-(gamma-L-Glu)(n+1) + ADP + phosphate + H(+). It carries out the reaction 10-formyltetrahydrofolyl-(gamma-L-Glu)(n) + L-glutamate + ATP = 10-formyltetrahydrofolyl-(gamma-L-Glu)(n+1) + ADP + phosphate + H(+). The catalysed reaction is (6R)-5,10-methylenetetrahydrofolyl-(gamma-L-Glu)(n) + L-glutamate + ATP = (6R)-5,10-methylenetetrahydrofolyl-(gamma-L-Glu)(n+1) + ADP + phosphate + H(+). Its pathway is cofactor biosynthesis; tetrahydrofolate biosynthesis; 7,8-dihydrofolate from 2-amino-4-hydroxy-6-hydroxymethyl-7,8-dihydropteridine diphosphate and 4-aminobenzoate: step 2/2. It functions in the pathway cofactor biosynthesis; tetrahydrofolylpolyglutamate biosynthesis. Functions in two distinct reactions of the de novo folate biosynthetic pathway. Catalyzes the addition of a glutamate residue to dihydropteroate (7,8-dihydropteroate or H2Pte) to form dihydrofolate (7,8-dihydrofolate monoglutamate or H2Pte-Glu). Also catalyzes successive additions of L-glutamate to tetrahydrofolate or 10-formyltetrahydrofolate or 5,10-methylenetetrahydrofolate, leading to folylpolyglutamate derivatives. This Buchnera aphidicola subsp. Schizaphis graminum (strain Sg) protein is Dihydrofolate synthase/folylpolyglutamate synthase (folC).